The following is a 361-amino-acid chain: uncharacterized protein (361 aa).

The residue at position 12 (T12) is a Phosphothreonine.

The protein localises to the cytoplasm. It localises to the nucleus. This is an uncharacterized protein from Schizosaccharomyces pombe (strain 972 / ATCC 24843) (Fission yeast).